We begin with the raw amino-acid sequence, 311 residues long: tRNA dimethylallyltransferase (311 aa).

Position 13–20 (13–20) interacts with ATP; sequence GPTASGKT. Residue 15-20 participates in substrate binding; sequence TASGKT. Interaction with substrate tRNA regions lie at residues 38–41 and 166–170; these read DSMQ and QRVLR.

The protein belongs to the IPP transferase family. As to quaternary structure, monomer. Mg(2+) serves as cofactor.

It carries out the reaction adenosine(37) in tRNA + dimethylallyl diphosphate = N(6)-dimethylallyladenosine(37) in tRNA + diphosphate. In terms of biological role, catalyzes the transfer of a dimethylallyl group onto the adenine at position 37 in tRNAs that read codons beginning with uridine, leading to the formation of N6-(dimethylallyl)adenosine (i(6)A). The protein is tRNA dimethylallyltransferase of Staphylococcus aureus (strain bovine RF122 / ET3-1).